Here is a 143-residue protein sequence, read N- to C-terminus: Mannitol-specific phosphotransferase enzyme IIA component (143 aa).

One can recognise a PTS EIIA type-2 domain in the interval 2–142; that stretch reads QVLAKENIKL…EDLIAIFNEV (141 aa). His62 (tele-phosphohistidine intermediate) is an active-site residue. Residue His62 is modified to Phosphohistidine; by HPr. Ser74 is subject to Phosphoserine.

Its subcellular location is the cytoplasm. The phosphoenolpyruvate-dependent sugar phosphotransferase system (sugar PTS), a major carbohydrate active transport system, catalyzes the phosphorylation of incoming sugar substrates concomitantly with their translocation across the cell membrane. The enzyme II CmtAB PTS system is involved in D-mannitol transport. In Bacillus subtilis (strain 168), this protein is Mannitol-specific phosphotransferase enzyme IIA component (mtlF).